A 163-amino-acid polypeptide reads, in one-letter code: UPF0523 protein B (163 aa).

It belongs to the UPF0523 family.

The sequence is that of UPF0523 protein B from Dictyostelium discoideum (Social amoeba).